We begin with the raw amino-acid sequence, 440 residues long: Thymidine phosphorylase (440 aa).

It belongs to the thymidine/pyrimidine-nucleoside phosphorylase family. Homodimer.

The enzyme catalyses thymidine + phosphate = 2-deoxy-alpha-D-ribose 1-phosphate + thymine. Its pathway is pyrimidine metabolism; dTMP biosynthesis via salvage pathway; dTMP from thymine: step 1/2. In terms of biological role, the enzymes which catalyze the reversible phosphorolysis of pyrimidine nucleosides are involved in the degradation of these compounds and in their utilization as carbon and energy sources, or in the rescue of pyrimidine bases for nucleotide synthesis. The chain is Thymidine phosphorylase from Yersinia pseudotuberculosis serotype O:1b (strain IP 31758).